The primary structure comprises 794 residues: Hyaluronan mediated motility receptor (794 aa).

Residues Met-1–Arg-87 are disordered. Ser-20 carries the phosphoserine modification. The span at Ser-74–Arg-87 shows a compositional bias: basic and acidic residues. Residues Asn-134, Asn-279, Asn-446, Asn-467, Asn-488, Asn-509, Asn-530, Asn-561, and Asn-601 are each glycosylated (N-linked (GlcNAc...) asparagine). Positions Glu-365–Gln-630 are required for interaction with FAM83D. 5 tandem repeats follow at residues Gln-442–Val-462, Gln-463–Glu-483, Gln-484–Glu-504, Gln-505–Val-525, and Gln-526–Tyr-546. The interval Gln-442 to Tyr-546 is 5 X 21 AA tandem repeats. Hyaluronic acid-binding stretches follow at residues Lys-719 to Lys-729 and Lys-741 to Lys-750. Thr-784 carries the phosphothreonine modification.

In terms of assembly, interacts with ANKRD26. Interacts with DYNLL1. Interacts with FAM83D/CHICA. As to expression, ubiquitously expressed.

Its subcellular location is the cell surface. The protein resides in the cytoplasm. It localises to the cytoskeleton. It is found in the spindle. Its function is as follows. Receptor for hyaluronic acid (HA). Involved in cell motility. When hyaluronan binds to HMMR, the phosphorylation of a number of proteins, including the PTK2/FAK1 occurs. May also be involved in cellular transformation and metastasis formation, and in regulating extracellular-regulated kinase (ERK) activity. May act as a regulator of adipogenesis. This Mus musculus (Mouse) protein is Hyaluronan mediated motility receptor (Hmmr).